Consider the following 1139-residue polypeptide: Dual 3',5'-cyclic-AMP and -GMP phosphodiesterase beta (1139 aa).

2 disordered regions span residues 1–42 (MGKV…NINK) and 154–177 (GISE…STSN). Residues 1-429 (MGKVEDFEEH…LNLNNWISSR (429 aa)) are Cytoplasmic-facing. Basic and acidic residues predominate over residues 9 to 22 (EHNKNSNQDIEKNV). Polar residues predominate over residues 29–42 (NSNTINDQNENINK). A helical transmembrane segment spans residues 430-450 (MIIIGIVMLILSFIIWPLTTW). At 451 to 462 (SLKTSTWGRETY) the chain is on the extracellular side. The helical transmembrane segment at 463-483 (IIILFHTLMAINTLILIFFII) threads the bilayer. Topologically, residues 484 to 498 (IGSTELCKYSECMSY) are cytoplasmic. The helical transmembrane segment at 499 to 519 (VLFSLMVALWGLWNIAIGLTL) threads the bilayer. Residues 520–536 (EYNPNLSEMPTTTYELE) lie on the Extracellular side of the membrane. N-linked (GlcNAc...) asparagine glycosylation is present at Asn-524. The chain crosses the membrane as a helical span at residues 537–557 (MIYVLTYIYGFLPLVIIDIFF). Residues 558–564 (PSRTKYN) are Cytoplasmic-facing. Residues 565-585 (WIIHLIFIFLNSSSIILVGSA) form a helical membrane-spanning segment. The Extracellular segment spans residues 586–592 (KPDFVPE). A helical transmembrane segment spans residues 593–613 (IYVVFRILAYTTLCIFLYIGS). The Cytoplasmic portion of the chain corresponds to 614–1139 (YTSELQIRYV…TLFFIKNVSD (526 aa)). One can recognise a PDEase domain in the interval 775–1098 (INISQLTKMI…IMWDTLMKEE (324 aa)). The active-site Proton donor is His-847. 847-851 (HNTIH) provides a ligand contact to a nucleoside 3',5'-cyclic phosphate. 4 residues coordinate a divalent metal cation: His-851, His-887, Asp-888, and Asp-1000. The a nucleoside 3',5'-cyclic phosphate site is built by Asp-888, Asp-1000, and Gln-1052.

It belongs to the cyclic nucleotide phosphodiesterase family. It depends on a divalent metal cation as a cofactor.

It localises to the cell membrane. Its subcellular location is the endoplasmic reticulum membrane. It carries out the reaction 3',5'-cyclic GMP + H2O = GMP + H(+). The enzyme catalyses 3',5'-cyclic AMP + H2O = AMP + H(+). Its pathway is purine metabolism; 3',5'-cyclic GMP degradation; GMP from 3',5'-cyclic GMP: step 1/1. It functions in the pathway purine metabolism; 3',5'-cyclic AMP degradation; AMP from 3',5'-cyclic AMP: step 1/1. Functionally, plays a role in signal transduction by regulating the intracellular concentration of cyclic nucleotides cAMP and cGMP. Catalyzes the hydrolysis of both cAMP and cGMP to 5'-AMP and 5'-GMP, respectively. By regulating cAMP levels during the asexual blood stage and, thus PKA activation, required for merozoite invasion of erythrocytes and for the parasite development immediately following invasion. This is Dual 3',5'-cyclic-AMP and -GMP phosphodiesterase beta from Plasmodium falciparum (isolate 3D7).